A 150-amino-acid polypeptide reads, in one-letter code: UPF0756 membrane protein Asuc_1151 (150 aa).

Helical transmembrane passes span 1–21 (MSLH…LGVL), 52–72 (YGLN…IVAG), 82–102 (LLHW…WLAG), and 123–143 (ILGV…AGIL).

The protein belongs to the UPF0756 family.

The protein localises to the cell membrane. The protein is UPF0756 membrane protein Asuc_1151 of Actinobacillus succinogenes (strain ATCC 55618 / DSM 22257 / CCUG 43843 / 130Z).